The chain runs to 218 residues: Thiopurine S-methyltransferase (218 aa).

4 residues coordinate S-adenosyl-L-methionine: W10, L45, E66, and R123.

Belongs to the class I-like SAM-binding methyltransferase superfamily. TPMT family.

Its subcellular location is the cytoplasm. The catalysed reaction is S-adenosyl-L-methionine + a thiopurine = S-adenosyl-L-homocysteine + a thiopurine S-methylether.. The polypeptide is Thiopurine S-methyltransferase (Shewanella sp. (strain MR-4)).